We begin with the raw amino-acid sequence, 84 residues long: Delta-conotoxin-like MVIB (84 aa).

The first 22 residues, 1 to 22, serve as a signal peptide directing secretion; that stretch reads MKLTCVMIVAVLFLTAWTFVTA. Positions 23-51 are excised as a propeptide; sequence DDSRYGLKDLFPKERHEMKNPEASKLNQR. Intrachain disulfides connect C54/C69, C61/C73, and C68/C77. P65 bears the 4-hydroxyproline mark. At S83 the chain carries Serine amide.

The protein belongs to the conotoxin O1 superfamily. In terms of tissue distribution, expressed by the venom duct.

Its subcellular location is the secreted. In terms of biological role, delta-conotoxins bind to site 6 of voltage-gated sodium channels (Nav) and inhibit the inactivation process. The polypeptide is Delta-conotoxin-like MVIB (Conus magus (Magical cone)).